A 404-amino-acid chain; its full sequence is Probable protein phosphatase 2C 30 (404 aa).

Residues 42 to 52 (AERGAEEETSG) are compositionally biased toward basic and acidic residues. The disordered stretch occupies residues 42-72 (AERGAEEETSGKRRRLDGGGGEASTDEEDRE). Positions 77 to 399 (RYGFTSVCGR…DNVSVVVVNL (323 aa)) constitute a PPM-type phosphatase domain. Mn(2+) contacts are provided by Asp-111, Gly-112, and Asp-298. The interval 321–369 (GRRERNRSSPTSNLSPRQSSSSGDEAPNDGAPSAAAGSESDEESAAEED) is disordered. Residues 330-343 (PTSNLSPRQSSSSG) are compositionally biased toward polar residues. Asp-390 serves as a coordination point for Mn(2+).

It belongs to the PP2C family. In terms of assembly, interacts with PYL5 and SAPK2. Binding to PYL5 is dependent on the presence of abscisic acid (ABA). Interacts with PYL3, PYL5 and PYL9. Binding to PYL5 and PYL9 is dependent on the presence of ABA. The cofactor is Mg(2+). Mn(2+) is required as a cofactor.

It localises to the nucleus. The catalysed reaction is O-phospho-L-seryl-[protein] + H2O = L-seryl-[protein] + phosphate. The enzyme catalyses O-phospho-L-threonyl-[protein] + H2O = L-threonyl-[protein] + phosphate. Functionally, together with ABI5, PYL5 and SAPK2, is part of an abscisic acid (ABA) signaling unit that modulates seed germination and early seedling growth. This is Probable protein phosphatase 2C 30 from Oryza sativa subsp. japonica (Rice).